Consider the following 315-residue polypeptide: Homoserine kinase (315 aa).

Residue 97 to 107 (PPARGLGSSAT) coordinates ATP.

It belongs to the GHMP kinase family. Homoserine kinase subfamily.

The protein localises to the cytoplasm. The enzyme catalyses L-homoserine + ATP = O-phospho-L-homoserine + ADP + H(+). It participates in amino-acid biosynthesis; L-threonine biosynthesis; L-threonine from L-aspartate: step 4/5. Its function is as follows. Catalyzes the ATP-dependent phosphorylation of L-homoserine to L-homoserine phosphate. The sequence is that of Homoserine kinase from Synechococcus sp. (strain CC9605).